A 201-amino-acid chain; its full sequence is dITP/XTP pyrophosphatase (201 aa).

9-14 is a substrate binding site; it reads SNNAGK. Residues Glu-41 and Asp-70 each contribute to the Mg(2+) site. The active-site Proton acceptor is Asp-70. Residues Ser-71, 155–158, Lys-178, and 183–184 contribute to the substrate site; these read FGYD and HR.

Belongs to the HAM1 NTPase family. Homodimer. Mg(2+) serves as cofactor.

The catalysed reaction is XTP + H2O = XMP + diphosphate + H(+). It catalyses the reaction dITP + H2O = dIMP + diphosphate + H(+). The enzyme catalyses ITP + H2O = IMP + diphosphate + H(+). Pyrophosphatase that catalyzes the hydrolysis of nucleoside triphosphates to their monophosphate derivatives, with a high preference for the non-canonical purine nucleotides XTP (xanthosine triphosphate), dITP (deoxyinosine triphosphate) and ITP. Seems to function as a house-cleaning enzyme that removes non-canonical purine nucleotides from the nucleotide pool, thus preventing their incorporation into DNA/RNA and avoiding chromosomal lesions. The chain is dITP/XTP pyrophosphatase from Methylococcus capsulatus (strain ATCC 33009 / NCIMB 11132 / Bath).